Here is a 369-residue protein sequence, read N- to C-terminus: GTPase Obg (369 aa).

Residues 1-159 enclose the Obg domain; that stretch reads MKFIDEAKIE…RELRLELKVL (159 aa). Residues 128–148 form a disordered region; the sequence is IHFKSSTNRAPRQKSEGKEGE. Residues 160–333 form the OBG-type G domain; the sequence is ADIGLLGMPN…LVTEIYEYIA (174 aa). Residues 166 to 173, 191 to 195, 213 to 216, 283 to 286, and 314 to 316 each bind GTP; these read GMPNAGKS, FTTLH, DIPG, NKLD, and SAL. Positions 173 and 193 each coordinate Mg(2+).

It belongs to the TRAFAC class OBG-HflX-like GTPase superfamily. OBG GTPase family. As to quaternary structure, monomer. Requires Mg(2+) as cofactor.

Its subcellular location is the cytoplasm. Functionally, an essential GTPase which binds GTP, GDP and possibly (p)ppGpp with moderate affinity, with high nucleotide exchange rates and a fairly low GTP hydrolysis rate. Plays a role in control of the cell cycle, stress response, ribosome biogenesis and in those bacteria that undergo differentiation, in morphogenesis control. This Janthinobacterium sp. (strain Marseille) (Minibacterium massiliensis) protein is GTPase Obg.